Consider the following 89-residue polypeptide: Small ribosomal subunit protein uS15 (89 aa).

The protein belongs to the universal ribosomal protein uS15 family. As to quaternary structure, part of the 30S ribosomal subunit. Forms a bridge to the 50S subunit in the 70S ribosome, contacting the 23S rRNA.

One of the primary rRNA binding proteins, it binds directly to 16S rRNA where it helps nucleate assembly of the platform of the 30S subunit by binding and bridging several RNA helices of the 16S rRNA. Its function is as follows. Forms an intersubunit bridge (bridge B4) with the 23S rRNA of the 50S subunit in the ribosome. The polypeptide is Small ribosomal subunit protein uS15 (Maridesulfovibrio salexigens (strain ATCC 14822 / DSM 2638 / NCIMB 8403 / VKM B-1763) (Desulfovibrio salexigens)).